Consider the following 563-residue polypeptide: 2-isopropylmalate synthase (563 aa).

The Pyruvate carboxyltransferase domain maps to 31 to 305; the sequence is PIWMSTDLRD…DPGLDFAQIN (275 aa). Mg(2+) is bound by residues aspartate 40, histidine 244, histidine 246, and asparagine 280. Residues 437-563 are regulatory domain; that stretch reads RAEPIEYLSH…EWARLCGGAE (127 aa).

It belongs to the alpha-IPM synthase/homocitrate synthase family. LeuA type 2 subfamily. Homodimer. Mg(2+) is required as a cofactor.

The protein localises to the cytoplasm. It carries out the reaction 3-methyl-2-oxobutanoate + acetyl-CoA + H2O = (2S)-2-isopropylmalate + CoA + H(+). It functions in the pathway amino-acid biosynthesis; L-leucine biosynthesis; L-leucine from 3-methyl-2-oxobutanoate: step 1/4. Functionally, catalyzes the condensation of the acetyl group of acetyl-CoA with 3-methyl-2-oxobutanoate (2-ketoisovalerate) to form 3-carboxy-3-hydroxy-4-methylpentanoate (2-isopropylmalate). In Parvibaculum lavamentivorans (strain DS-1 / DSM 13023 / NCIMB 13966), this protein is 2-isopropylmalate synthase.